Here is a 488-residue protein sequence, read N- to C-terminus: Probable malate:quinone oxidoreductase (488 aa).

The protein belongs to the MQO family. Requires FAD as cofactor.

The enzyme catalyses (S)-malate + a quinone = a quinol + oxaloacetate. It participates in carbohydrate metabolism; tricarboxylic acid cycle; oxaloacetate from (S)-malate (quinone route): step 1/1. The sequence is that of Probable malate:quinone oxidoreductase from Neisseria meningitidis serogroup A / serotype 4A (strain DSM 15465 / Z2491).